The chain runs to 735 residues: Disintegrin and metalloproteinase domain-containing protein 2 (735 aa).

Residues 1–16 form the signal peptide; that stretch reads MWRVLFLLSGLGGLRM. A propeptide spanning residues 17–174 is cleaved from the precursor; that stretch reads DSNFDSLPVQ…FKLQSVEPQQ (158 aa). 2 N-linked (GlcNAc...) asparagine glycosylation sites follow: asparagine 122 and asparagine 220. Over 175 to 686 the chain is Extracellular; that stretch reads DFAKYIEMHV…ENIYHSKPMR (512 aa). In terms of domain architecture, Peptidase M12B spans 178–375; it reads KYIEMHVIVE…QKSQCLHNQP (198 aa). 4 disulfides stabilise this stretch: cysteine 287/cysteine 370, cysteine 329/cysteine 354, cysteine 331/cysteine 336, and cysteine 445/cysteine 465. 3 N-linked (GlcNAc...) asparagine glycosylation sites follow: asparagine 353, asparagine 459, and asparagine 566. The Disintegrin domain maps to 384 to 473; it reads QAVCGNAKLE…SCPENHYVQT (90 aa). The region spanning 612 to 645 is the EGF-like domain; it reads LGYDCTTDKCNDRGVCNNKKHCHCSASYLPPDCS. Intrachain disulfides connect cysteine 616–cysteine 627, cysteine 621–cysteine 633, and cysteine 635–cysteine 644. The chain crosses the membrane as a helical span at residues 687 to 707; sequence WPFFLFIPFFIIFCVLIAIMV. Residues 708–735 are Cytoplasmic-facing; the sequence is KVNFQRKKWRTEDYSSDEQPESESEPKG. Serine 729 is subject to Phosphoserine.

Post-translationally, the prodomain and the metalloprotease domain are cleaved during the epididymal maturation of the spermatozoa. In terms of tissue distribution, expressed specifically in spermatogenic cells in the seminiferous cells. Not detected in fetal tissues.

The protein resides in the membrane. In terms of biological role, sperm surface membrane protein that may be involved in sperm-egg plasma membrane adhesion and fusion during fertilization. Could have a direct role in sperm-zona binding or migration of sperm from the uterus into the oviduct. Interactions with egg membrane could be mediated via binding between its disintegrin-like domain to one or more integrins receptors on the egg. This is a non catalytic metalloprotease-like protein. This chain is Disintegrin and metalloproteinase domain-containing protein 2 (ADAM2), found in Homo sapiens (Human).